The chain runs to 452 residues: Exodeoxyribonuclease 7 large subunit (452 aa).

The protein belongs to the XseA family. As to quaternary structure, heterooligomer composed of large and small subunits.

It localises to the cytoplasm. It carries out the reaction Exonucleolytic cleavage in either 5'- to 3'- or 3'- to 5'-direction to yield nucleoside 5'-phosphates.. Functionally, bidirectionally degrades single-stranded DNA into large acid-insoluble oligonucleotides, which are then degraded further into small acid-soluble oligonucleotides. In Bacillus cereus (strain G9842), this protein is Exodeoxyribonuclease 7 large subunit.